The following is a 302-amino-acid chain: Protein MGF 110-11L (302 aa).

A helical transmembrane segment spans residues 26-46; it reads PFGCNMKGLGVLLGLFSLILA. N-linked (GlcNAc...) asparagine; by host glycosylation occurs at N97. The next 2 helical transmembrane spans lie at 154–174 and 183–203; these read LTLK…GCFV and LNTT…AQPV. N294 carries N-linked (GlcNAc...) asparagine; by host glycosylation.

Belongs to the asfivirus MGF 110 family.

Its subcellular location is the host membrane. Its function is as follows. Plays a role in virus cell tropism, and may be required for efficient virus replication in macrophages. The protein is Protein MGF 110-11L of African swine fever virus (isolate Tick/South Africa/Pretoriuskop Pr4/1996) (ASFV).